We begin with the raw amino-acid sequence, 353 residues long: Nicotinate-nucleotide--dimethylbenzimidazole phosphoribosyltransferase (353 aa).

E318 serves as the catalytic Proton acceptor.

The protein belongs to the CobT family.

It catalyses the reaction 5,6-dimethylbenzimidazole + nicotinate beta-D-ribonucleotide = alpha-ribazole 5'-phosphate + nicotinate + H(+). It participates in nucleoside biosynthesis; alpha-ribazole biosynthesis; alpha-ribazole from 5,6-dimethylbenzimidazole: step 1/2. Functionally, catalyzes the synthesis of alpha-ribazole-5'-phosphate from nicotinate mononucleotide (NAMN) and 5,6-dimethylbenzimidazole (DMB). This chain is Nicotinate-nucleotide--dimethylbenzimidazole phosphoribosyltransferase, found in Roseiflexus sp. (strain RS-1).